We begin with the raw amino-acid sequence, 881 residues long: DNA mismatch repair protein MutS (881 aa).

632–639 (GPNMGGKS) is a binding site for ATP.

It belongs to the DNA mismatch repair MutS family.

In terms of biological role, this protein is involved in the repair of mismatches in DNA. It is possible that it carries out the mismatch recognition step. This protein has a weak ATPase activity. In Chelativorans sp. (strain BNC1), this protein is DNA mismatch repair protein MutS.